We begin with the raw amino-acid sequence, 171 residues long: Antimicrobial protein CAP18 (171 aa).

The signal sequence occupies residues 1-29; that stretch reads METHKHGPSLAWWSLLLLLLGLLMPPAIA. 2 cysteine pairs are disulfide-bonded: C85/C96 and C107/C124.

The protein belongs to the cathelicidin family. As to expression, neutrophils.

The protein resides in the secreted. CAP18 binds to the lipid A moiety of bacterial lipopolysaccharides (LPS), a glycolipid present in the outer membrane of all Gram-negative bacteria. Has antibiotic activity. This is Antimicrobial protein CAP18 (CAP18) from Oryctolagus cuniculus (Rabbit).